The following is a 437-amino-acid chain: Tol-Pal system protein TolB (437 aa).

A signal peptide spans 1 to 30; the sequence is MLPTPSRSHKLSGYAAVLFFLWLVCSPAQA. A compositionally biased stretch (polar residues) spans 410–423; the sequence is SDGRTRQQLSTQTG. The disordered stretch occupies residues 410 to 437; the sequence is SDGRTRQQLSTQTGDIREPAWGPLRRLQ.

It belongs to the TolB family. In terms of assembly, the Tol-Pal system is composed of five core proteins: the inner membrane proteins TolA, TolQ and TolR, the periplasmic protein TolB and the outer membrane protein Pal. They form a network linking the inner and outer membranes and the peptidoglycan layer.

The protein localises to the periplasm. Its function is as follows. Part of the Tol-Pal system, which plays a role in outer membrane invagination during cell division and is important for maintaining outer membrane integrity. The protein is Tol-Pal system protein TolB of Nitrosospira multiformis (strain ATCC 25196 / NCIMB 11849 / C 71).